We begin with the raw amino-acid sequence, 74 residues long: Cecropin-P3 (74 aa).

An N-terminal signal peptide occupies residues 1–13 (MFLIYLLVQTAES). The propeptide at 45–74 (RRRSVGEEDAIPSHIEVNKFFLRKPAKEHI) is removed in mature form.

It belongs to the cecropin family. Expressed in the body wall, intestine, uterus and ovary.

Its subcellular location is the secreted. Its function is as follows. Has antibacterial activity against several Gram-positive and Gram-negative bacteria. Is weakly active against yeasts. Acts by a nonpore mechanism. The chain is Cecropin-P3 (ASCEC-3) from Ascaris suum (Pig roundworm).